We begin with the raw amino-acid sequence, 146 residues long: Hemoglobin subunit beta (146 aa).

V1 bears the N-acetylvaline mark. The Globin domain maps to 2–146; it reads QLSGEEKAAV…VANALAHKYH (145 aa). S44 carries the post-translational modification Phosphoserine. The residue at position 59 (K59) is an N6-acetyllysine. Residue H63 participates in heme b binding. Position 82 is an N6-acetyllysine (K82). H92 contacts heme b. C93 is modified (S-nitrosocysteine). An N6-acetyllysine modification is found at K144.

The protein belongs to the globin family. Heterotetramer of two alpha chains and two beta chains. As to expression, red blood cells.

Involved in oxygen transport from the lung to the various peripheral tissues. The polypeptide is Hemoglobin subunit beta (HBB) (Equus caballus (Horse)).